The chain runs to 152 residues: UPF0266 membrane protein PM0830 (152 aa).

3 helical membrane-spanning segments follow: residues 1–21 (MMII…YAFY), 45–65 (KDAL…YTNL), and 66–86 (SSAT…AAFI).

This sequence belongs to the UPF0266 family.

It is found in the cell inner membrane. This is UPF0266 membrane protein PM0830 from Pasteurella multocida (strain Pm70).